Here is a 173-residue protein sequence, read N- to C-terminus: Disulfide bond formation protein B (173 aa).

The Cytoplasmic portion of the chain corresponds to 1-16 (MRILSSLKTFSQSRLS). The chain crosses the membrane as a helical span at residues 17-33 (WLLLLAFVVFFTLCAMY). Residues 34–51 (FQHVMLLAPCVMCIYERI) are Periplasmic-facing. A disulfide bond links cysteine 43 and cysteine 46. Residues 52–67 (AMLGIGVAALIGAIAP) form a helical membrane-spanning segment. At 68 to 74 (QNPVVRW) the chain is on the cytoplasmic side. Residues 75–92 (LGFAAWGASSYKGLMLAI) traverse the membrane as a helical segment. Residues 93–147 (EHVNYQFNPSPFATCDLFVTFPAWAPLNQWAPNLFEAYGDCSKVVWQFLTLSMPQ) lie on the Periplasmic side of the membrane. An intrachain disulfide couples cysteine 107 to cysteine 133. The chain crosses the membrane as a helical span at residues 148–166 (WLVVIFAANLLALAIFVVA). The Cytoplasmic portion of the chain corresponds to 167 to 173 (QLAKTSR).

The protein belongs to the DsbB family.

The protein localises to the cell inner membrane. In terms of biological role, required for disulfide bond formation in some periplasmic proteins. Acts by oxidizing the DsbA protein. In Vibrio cholerae serotype O1 (strain ATCC 39315 / El Tor Inaba N16961), this protein is Disulfide bond formation protein B.